The following is a 123-amino-acid chain: Non-specific lipid-transfer protein 3 (123 aa).

The signal sequence occupies residues 1–25 (MASSGQLLKLVCLVAVMCCMAVGGP). Cystine bridges form between cysteine 33-cysteine 80, cysteine 43-cysteine 57, cysteine 58-cysteine 105, and cysteine 78-cysteine 119.

This sequence belongs to the plant LTP family.

Plant non-specific lipid-transfer proteins transfer phospholipids as well as galactolipids across membranes. May play a role in wax or cutin deposition in the cell walls of expanding epidermal cells and certain secretory tissues. The chain is Non-specific lipid-transfer protein 3 from Prunus dulcis (Almond).